The sequence spans 388 residues: Nitric oxide reductase FlRd-NAD(+) reductase (388 aa).

Belongs to the FAD-dependent oxidoreductase family. The cofactor is FAD.

The protein resides in the cytoplasm. It catalyses the reaction 2 reduced [nitric oxide reductase rubredoxin domain] + NAD(+) + H(+) = 2 oxidized [nitric oxide reductase rubredoxin domain] + NADH. Its pathway is nitrogen metabolism; nitric oxide reduction. One of at least two accessory proteins for anaerobic nitric oxide (NO) reductase. Reduces the rubredoxin moiety of NO reductase. This is Nitric oxide reductase FlRd-NAD(+) reductase from Aeromonas hydrophila subsp. hydrophila (strain ATCC 7966 / DSM 30187 / BCRC 13018 / CCUG 14551 / JCM 1027 / KCTC 2358 / NCIMB 9240 / NCTC 8049).